The sequence spans 145 residues: MSQEQAEQLMQQMQMLETYFADLSQRENTFLGVFREATAAIESIKSLSKNPESDTLVPIGLGTYVPTKISSDSKIILNIGAGVAVEKDFPSAINYLEERIKEIEIAIQDTAAKKQDAAQRLEQGKAQVNQLMQAMQQSGQPPKSG.

This sequence belongs to the prefoldin alpha subunit family. In terms of assembly, heterohexamer of two alpha and four beta subunits.

Its subcellular location is the cytoplasm. In terms of biological role, molecular chaperone capable of stabilizing a range of proteins. Seems to fulfill an ATP-independent, HSP70-like function in archaeal de novo protein folding. The protein is Prefoldin subunit alpha of Nitrosopumilus maritimus (strain SCM1).